A 29-amino-acid polypeptide reads, in one-letter code: Beta-hexatoxin-Mr1a (29 aa).

3 cysteine pairs are disulfide-bonded: Cys-2–Cys-16, Cys-9–Cys-21, and Cys-15–Cys-26.

Belongs to the neurotoxin 15 family. 01 (magi-5) subfamily. In terms of tissue distribution, expressed by the venom gland.

Its subcellular location is the secreted. Its function is as follows. Insect and vertebrate active toxin. Binds at site 4 of mammalian voltage-gated sodium channels and shifts the activation voltage of the mammalian rNav1.2a (SCN2A) channel to more hyperpolarized voltages, whereas the insect channel, DmNav1 (para), is not affected. Causes temporary paralysis when injected into lepidopteran larvae at 8.6 nmol/g. A low intracranial injection dose into mice causes lacrimation, closure of the eyes and sweating. A high injection dose causes extensive lacrimation and death. The protein is Beta-hexatoxin-Mr1a of Macrothele raveni (Funnel-web spider).